Reading from the N-terminus, the 415-residue chain is Multidrug resistance protein MdtA (415 aa).

An N-terminal signal peptide occupies residues 1–21; sequence MKGSYKSRWVIVIVVVIAAIA. Over residues 31–47 the composition is skewed to polar residues; sequence DSQSAAPGATKQAQQSP. 2 disordered regions span residues 31 to 60 and 392 to 415; these read DSQSAAPGATKQAQQSPAGGRRGMRSGPLA and EAQSATTPEEKATSREYAKKGARS. The segment covering 399–415 has biased composition (basic and acidic residues); sequence PEEKATSREYAKKGARS.

It belongs to the membrane fusion protein (MFP) (TC 8.A.1) family. In terms of assembly, part of a tripartite efflux system composed of MdtA, MdtB and MdtC.

It localises to the cell inner membrane. Functionally, the MdtABC tripartite complex confers resistance against novobiocin and deoxycholate. In Escherichia coli O157:H7, this protein is Multidrug resistance protein MdtA.